A 236-amino-acid chain; its full sequence is Small ribosomal subunit protein uS3 (236 aa).

The 69-residue stretch at 39 to 107 folds into the KH type-2 domain; it reads IRKFLKREMY…EVFINIKEAK (69 aa). Residues 214-229 show a composition bias toward basic and acidic residues; sequence PEKKEESKSGDKEVRS. The segment at 214–236 is disordered; that stretch reads PEKKEESKSGDKEVRSKSRRGRQ.

Belongs to the universal ribosomal protein uS3 family. Part of the 30S ribosomal subunit. Forms a tight complex with proteins S10 and S14.

In terms of biological role, binds the lower part of the 30S subunit head. Binds mRNA in the 70S ribosome, positioning it for translation. The chain is Small ribosomal subunit protein uS3 from Helicobacter hepaticus (strain ATCC 51449 / 3B1).